A 538-amino-acid polypeptide reads, in one-letter code: CTP synthase (538 aa).

An amidoligase domain region spans residues 1-266; it reads MRTKYIFITG…DQKIVDLLNI (266 aa). Position 14 (Ser14) interacts with CTP. Ser14 is a UTP binding site. Residues 15–20 and Asp72 each bind ATP; that span reads SLGKGL. Mg(2+) is bound by residues Asp72 and Glu140. CTP contacts are provided by residues 147-149, 187-192, and Lys223; these read DIE and KTKPTQ. Residues 187–192 and Lys223 each bind UTP; that span reads KTKPTQ. Position 239–241 (239–241) interacts with ATP; sequence KDV. The Glutamine amidotransferase type-1 domain maps to 291–533; it reads NIAIVGKYVN…IEAALRYRKK (243 aa). Residue Gly353 coordinates L-glutamine. The active-site Nucleophile; for glutamine hydrolysis is the Cys380. L-glutamine-binding positions include 381–384, Glu404, and Arg461; that span reads LGMQ. Active-site residues include His506 and Glu508.

It belongs to the CTP synthase family. As to quaternary structure, homotetramer.

The catalysed reaction is UTP + L-glutamine + ATP + H2O = CTP + L-glutamate + ADP + phosphate + 2 H(+). It carries out the reaction L-glutamine + H2O = L-glutamate + NH4(+). It catalyses the reaction UTP + NH4(+) + ATP = CTP + ADP + phosphate + 2 H(+). The protein operates within pyrimidine metabolism; CTP biosynthesis via de novo pathway; CTP from UDP: step 2/2. Its activity is regulated as follows. Allosterically activated by GTP, when glutamine is the substrate; GTP has no effect on the reaction when ammonia is the substrate. The allosteric effector GTP functions by stabilizing the protein conformation that binds the tetrahedral intermediate(s) formed during glutamine hydrolysis. Inhibited by the product CTP, via allosteric rather than competitive inhibition. Functionally, catalyzes the ATP-dependent amination of UTP to CTP with either L-glutamine or ammonia as the source of nitrogen. Regulates intracellular CTP levels through interactions with the four ribonucleotide triphosphates. This Syntrophus aciditrophicus (strain SB) protein is CTP synthase.